Reading from the N-terminus, the 346-residue chain is Phosphoribosylformylglycinamidine cyclo-ligase (346 aa).

It belongs to the AIR synthase family.

Its subcellular location is the cytoplasm. The catalysed reaction is 2-formamido-N(1)-(5-O-phospho-beta-D-ribosyl)acetamidine + ATP = 5-amino-1-(5-phospho-beta-D-ribosyl)imidazole + ADP + phosphate + H(+). It functions in the pathway purine metabolism; IMP biosynthesis via de novo pathway; 5-amino-1-(5-phospho-D-ribosyl)imidazole from N(2)-formyl-N(1)-(5-phospho-D-ribosyl)glycinamide: step 2/2. In Bacillus thuringiensis subsp. konkukian (strain 97-27), this protein is Phosphoribosylformylglycinamidine cyclo-ligase.